A 67-amino-acid polypeptide reads, in one-letter code: Conotoxin VnMMSK-02 (67 aa).

The N-terminal stretch at 1–20 is a signal peptide; that stretch reads MMSKLGALLTICLLLFPLTA. Residues 21-52 constitute a propeptide that is removed on maturation; the sequence is LPLDGDQPADRPAERMQDDISSEQHPLFDKER. Gln53 is subject to Pyrrolidone carboxylic acid. Cystine bridges form between Cys54-Cys66, Cys55-Cys62, and Cys59-Cys65. Pro64 is modified (4-hydroxyproline). A Cysteine amide modification is found at Cys66.

The protein belongs to the conotoxin M superfamily. In terms of tissue distribution, expressed by the venom duct.

It localises to the secreted. The sequence is that of Conotoxin VnMMSK-02 from Conus ventricosus (Mediterranean cone).